We begin with the raw amino-acid sequence, 108 residues long: Probable endonuclease 4 (108 aa).

Zn(2+) is bound by residues H2, H36, D49, H51, and E81.

It belongs to the AP endonuclease 2 family. Zn(2+) serves as cofactor.

It carries out the reaction Endonucleolytic cleavage to 5'-phosphooligonucleotide end-products.. Endonuclease IV plays a role in DNA repair. It cleaves phosphodiester bonds at apurinic or apyrimidinic (AP) sites, generating a 3'-hydroxyl group and a 5'-terminal sugar phosphate. The sequence is that of Probable endonuclease 4 (nfo) from Thermotoga neapolitana.